The primary structure comprises 141 residues: Large ribosomal subunit protein uL11 (141 aa).

Belongs to the universal ribosomal protein uL11 family. In terms of assembly, part of the ribosomal stalk of the 50S ribosomal subunit. Interacts with L10 and the large rRNA to form the base of the stalk. L10 forms an elongated spine to which L12 dimers bind in a sequential fashion forming a multimeric L10(L12)X complex. One or more lysine residues are methylated.

Forms part of the ribosomal stalk which helps the ribosome interact with GTP-bound translation factors. This is Large ribosomal subunit protein uL11 from Chlorobaculum tepidum (strain ATCC 49652 / DSM 12025 / NBRC 103806 / TLS) (Chlorobium tepidum).